Here is a 432-residue protein sequence, read N- to C-terminus: Glyceraldehyde-3-phosphate dehydrogenase, testis-specific (432 aa).

The testis-specific N-terminal extension stretch occupies residues 1-97 (MSRRDVVLTN…PPPPPPPKPA (97 aa)). The tract at residues 40-101 (PPPPKVEEPP…PPPKPAKELT (62 aa)) is disordered. Residues 44-55 (KVEEPPPPKEEP) are compositionally biased toward basic and acidic residues. Pro residues-rich tracts occupy residues 56 to 67 (PPPPPPPPPPQI) and 75 to 95 (APPPPPPPPPPPPPPPPPPPK). NAD(+) contacts are provided by residues 109–110 (RI), Asp-130, Lys-175, Tyr-197, and Thr-217. D-glyceraldehyde 3-phosphate-binding positions include 247–249 (SCT), Thr-278, 307–308 (TG), and Arg-330. Cys-248 (nucleophile) is an active-site residue. Ser-350 bears the Phosphoserine mark. Asn-412 serves as a coordination point for NAD(+).

Belongs to the glyceraldehyde-3-phosphate dehydrogenase family. As to quaternary structure, homotetramer. In terms of tissue distribution, expressed in both head and flagellum of epididymal sperm.

It localises to the cytoplasm. The catalysed reaction is D-glyceraldehyde 3-phosphate + phosphate + NAD(+) = (2R)-3-phospho-glyceroyl phosphate + NADH + H(+). It functions in the pathway carbohydrate degradation; glycolysis; pyruvate from D-glyceraldehyde 3-phosphate: step 1/5. In terms of biological role, may play an important role in regulating the switch between different pathways for energy production during spermiogenesis and in the spermatozoon. Required for sperm motility and male fertility. This Rattus norvegicus (Rat) protein is Glyceraldehyde-3-phosphate dehydrogenase, testis-specific (Gapdhs).